We begin with the raw amino-acid sequence, 1386 residues long: DNA-directed RNA polymerase subunit beta'' (1386 aa).

The Zn(2+) site is built by Cys224, Cys294, Cys301, and Cys304.

Belongs to the RNA polymerase beta' chain family. RpoC2 subfamily. In terms of assembly, in plastids the minimal PEP RNA polymerase catalytic core is composed of four subunits: alpha, beta, beta', and beta''. When a (nuclear-encoded) sigma factor is associated with the core the holoenzyme is formed, which can initiate transcription. Zn(2+) serves as cofactor.

The protein resides in the plastid. The protein localises to the chloroplast. The catalysed reaction is RNA(n) + a ribonucleoside 5'-triphosphate = RNA(n+1) + diphosphate. DNA-dependent RNA polymerase catalyzes the transcription of DNA into RNA using the four ribonucleoside triphosphates as substrates. In Acorus calamus (Sweet flag), this protein is DNA-directed RNA polymerase subunit beta''.